The primary structure comprises 338 residues: Fructose-1,6-bisphosphatase class 1 (338 aa).

Residues Glu-92, Asp-115, Leu-117, and Asp-118 each contribute to the Mg(2+) site. Substrate-binding positions include 118–121, Asn-211, Tyr-244, and Lys-274; that span reads DGSS. Glu-280 is a binding site for Mg(2+).

This sequence belongs to the FBPase class 1 family. Homotetramer. It depends on Mg(2+) as a cofactor.

It is found in the cytoplasm. The catalysed reaction is beta-D-fructose 1,6-bisphosphate + H2O = beta-D-fructose 6-phosphate + phosphate. The protein operates within carbohydrate biosynthesis; gluconeogenesis. This is Fructose-1,6-bisphosphatase class 1 from Photobacterium profundum (strain SS9).